A 436-amino-acid polypeptide reads, in one-letter code: Gamma-glutamyl phosphate reductase (436 aa).

Belongs to the gamma-glutamyl phosphate reductase family.

It localises to the cytoplasm. It carries out the reaction L-glutamate 5-semialdehyde + phosphate + NADP(+) = L-glutamyl 5-phosphate + NADPH + H(+). Its pathway is amino-acid biosynthesis; L-proline biosynthesis; L-glutamate 5-semialdehyde from L-glutamate: step 2/2. Functionally, catalyzes the NADPH-dependent reduction of L-glutamate 5-phosphate into L-glutamate 5-semialdehyde and phosphate. The product spontaneously undergoes cyclization to form 1-pyrroline-5-carboxylate. The protein is Gamma-glutamyl phosphate reductase of Prochlorococcus marinus (strain MIT 9301).